Reading from the N-terminus, the 353-residue chain is Quinolinate synthase (353 aa).

His-47 and Ser-68 together coordinate iminosuccinate. Cys-113 serves as a coordination point for [4Fe-4S] cluster. Iminosuccinate-binding positions include 139–141 (YAN) and Ser-156. [4Fe-4S] cluster is bound at residue Cys-200. Iminosuccinate is bound by residues 226 to 228 (HPE) and Thr-243. Cys-297 contacts [4Fe-4S] cluster.

Belongs to the quinolinate synthase family. Type 1 subfamily. The cofactor is [4Fe-4S] cluster.

It localises to the cytoplasm. The enzyme catalyses iminosuccinate + dihydroxyacetone phosphate = quinolinate + phosphate + 2 H2O + H(+). Its pathway is cofactor biosynthesis; NAD(+) biosynthesis; quinolinate from iminoaspartate: step 1/1. Catalyzes the condensation of iminoaspartate with dihydroxyacetone phosphate to form quinolinate. This chain is Quinolinate synthase, found in Pectobacterium carotovorum subsp. carotovorum (strain PC1).